The chain runs to 336 residues: NmrA-like family domain-containing oxidoreductase FrzB (336 aa).

Position 135 (Lys-135) interacts with NADP(+).

This sequence belongs to the NmrA-type oxidoreductase family.

It carries out the reaction 4-{[(2S,5S)-5-[(4-hydroxyphenyl)methyl]-2,5-dihydropyrazin-2-yl]methyl}phenol + 2 NADPH + 2 H(+) = (S,S)-2,5-di-(p-hydroxybenzyl)piperazine + 2 NADP(+). The protein operates within secondary metabolite biosynthesis. In terms of biological role, nmrA-like family domain-containing oxidoreductase; part of the gene cluster that mediates the biosynthesis of the alkaloid (-)-FR901483, a potent immunosuppressant that shows efficacy in animal models and a probable inhibitor of purine nucleotide biosynthesis by targeting phosphoribosylpyrophosphate amidotransferase (PPAT). Within the pathway, FrzB catalyzes the reduction of 4-{[(2S,5S)-5-[(4-hydroxyphenyl)methyl]-2,5-dihydropyrazin-2-yl]methyl}phenol to produce the (S,S)-dityrosyl-piperazine intermediate. The biosynthesis of (-)-FR901483 starts with the condensation of two L-tyrosines to yield (S,S)-dityrosyl-piperazine. This process occurs in 3 steps with the non-canonical nonribosomal peptide synthetase FrzA catalyzing the reduction of L-tyrosine into L-tyrosinal, the spontaneous condensation of 2 L-tyrosinal units, and the subsequent reduction by the NmrA-like family domain-containing oxidoreductase FrzB. The cytochrome P450 monooxygenase FrzC then performs coupling between N10 and C1' to morph the piperazine into a 1,4-diazabicyclo[3.2.1]octane spiro-fused to a 2,5-cyclohexadienone. The dienone portion is further reduced to cyclohexanone by the flavin-dependent reductase FrzD. The methyltranserases (MTs) FrzE and FrzF are then involved in the methylation at the C10' amine and the C4 phenolic oxygen, respectively. The order of the two MTs appear to be interchangeable. Cleavage of the C9-N10' bond by the dioxygenase FrzG then leads to formation of a conjugated iminium. In addition to the oxidation of C9, an additional dehydrogenation between C7 and C8 can occur to give a likely shunt product. The next biosynthetic step is the intramolecular aldol condensation catalyzed by the newly identified aldolase FrzH to yield an aza-tricyclic product with the formation of a C9-C3' bond. The short-chain dehydrogenase/reductase FrzI then produces dephospho-(-)-FR901483 that is phosphorylated at C4'-OH into (-)-FR901483 by the phosphotransferase FrzJ. This is NmrA-like family domain-containing oxidoreductase FrzB from Cladobotryum sp.